The sequence spans 428 residues: Adenylosuccinate synthetase (428 aa).

GTP contacts are provided by residues 12–18 (GDEGKGK) and 40–42 (GHT). Residue aspartate 13 is the Proton acceptor of the active site. Residues aspartate 13 and glycine 40 each contribute to the Mg(2+) site. IMP is bound by residues 13–16 (DEGK), 38–41 (NAGH), threonine 130, arginine 144, glutamine 225, threonine 240, and arginine 304. Histidine 41 (proton donor) is an active-site residue. 300–306 (VTTGRAR) contributes to the substrate binding site. GTP contacts are provided by residues arginine 306, 332–334 (KID), and 414–416 (SVG).

Belongs to the adenylosuccinate synthetase family. Homodimer. Requires Mg(2+) as cofactor.

It is found in the cytoplasm. It carries out the reaction IMP + L-aspartate + GTP = N(6)-(1,2-dicarboxyethyl)-AMP + GDP + phosphate + 2 H(+). The protein operates within purine metabolism; AMP biosynthesis via de novo pathway; AMP from IMP: step 1/2. Functionally, plays an important role in the de novo pathway of purine nucleotide biosynthesis. Catalyzes the first committed step in the biosynthesis of AMP from IMP. This Clostridium botulinum (strain Okra / Type B1) protein is Adenylosuccinate synthetase.